Here is a 263-residue protein sequence, read N- to C-terminus: Tryptophan synthase alpha chain (263 aa).

Active-site proton acceptor residues include Glu47 and Asp58.

This sequence belongs to the TrpA family. Tetramer of two alpha and two beta chains.

It is found in the plastid. Its subcellular location is the chloroplast. It catalyses the reaction (1S,2R)-1-C-(indol-3-yl)glycerol 3-phosphate + L-serine = D-glyceraldehyde 3-phosphate + L-tryptophan + H2O. Its pathway is amino-acid biosynthesis; L-tryptophan biosynthesis; L-tryptophan from chorismate: step 5/5. In terms of biological role, the alpha subunit is responsible for the aldol cleavage of indoleglycerol phosphate to indole and glyceraldehyde 3-phosphate. This chain is Tryptophan synthase alpha chain, found in Antithamnion sp. (Red alga).